The chain runs to 233 residues: Large ribosomal subunit protein uL1 (233 aa).

This sequence belongs to the universal ribosomal protein uL1 family. As to quaternary structure, part of the 50S ribosomal subunit.

In terms of biological role, binds directly to 23S rRNA. The L1 stalk is quite mobile in the ribosome, and is involved in E site tRNA release. Protein L1 is also a translational repressor protein, it controls the translation of the L11 operon by binding to its mRNA. The polypeptide is Large ribosomal subunit protein uL1 (Shewanella amazonensis (strain ATCC BAA-1098 / SB2B)).